A 265-amino-acid polypeptide reads, in one-letter code: Hemin import ATP-binding protein HmuV (265 aa).

The ABC transporter domain maps to 10–247; sequence LVARHLRFQT…ETLAHWYRAD (238 aa). 42–49 contacts ATP; it reads GPNGAGKS.

This sequence belongs to the ABC transporter superfamily. Heme (hemin) importer (TC 3.A.1.14.5) family. The complex is composed of two ATP-binding proteins (HmuV), two transmembrane proteins (HmuU) and a solute-binding protein (HmuT).

It localises to the cell inner membrane. Functionally, part of the ABC transporter complex HmuTUV involved in hemin import. Responsible for energy coupling to the transport system. The polypeptide is Hemin import ATP-binding protein HmuV (Pectobacterium atrosepticum (strain SCRI 1043 / ATCC BAA-672) (Erwinia carotovora subsp. atroseptica)).